A 419-amino-acid chain; its full sequence is Transcription termination factor Rho (419 aa).

The region spanning aspartate 48–lysine 123 is the Rho RNA-BD domain. RNA-binding regions lie at residues glycine 61–arginine 66, aspartate 78–tyrosine 80, and glutamate 108–tyrosine 110. ATP contacts are provided by residues glycine 169–glycine 174, lysine 181–isoleucine 186, and arginine 212. The segment at valine 284–glycine 288 is RNA-binding 2.

Belongs to the Rho family. As to quaternary structure, homohexamer. The homohexamer assembles into an open ring structure.

Facilitates transcription termination by a mechanism that involves Rho binding to the nascent RNA, activation of Rho's RNA-dependent ATPase activity, and release of the mRNA from the DNA template. This is Transcription termination factor Rho from Buchnera aphidicola subsp. Schizaphis graminum (strain Sg).